Here is a 429-residue protein sequence, read N- to C-terminus: G2/mitotic-specific cyclin-B1 (429 aa).

The interval 71 to 114 is disordered; it reads TGKVSAKIPPPKPLEKVPPVSEPEVELAETHEPEPVMDEKLSPE. Lys73 bears the N6-acetyllysine mark. Over residues 98–112 the composition is skewed to basic and acidic residues; the sequence is AETHEPEPVMDEKLS. Ser122 is subject to Phosphoserine; by CDK1. Phosphoserine is present on Ser124. Ser129 bears the Phosphoserine; by PLK1 mark. Position 143 is a phosphoserine (Ser143). 2 interaction with CDK2 regions span residues 165–173 and 254–257; these read EYVKDIYAY and YEEM. Thr317 carries the post-translational modification Phosphothreonine.

This sequence belongs to the cyclin family. Cyclin AB subfamily. In terms of assembly, interacts with the CDC2 protein kinase to form a serine/threonine kinase holoenzyme complex also known as maturation promoting factor (MPF). The cyclin subunit imparts substrate specificity to the complex. Binds HEI10. Interacts with catalytically active RALBP1 and CDC2 during mitosis to form an endocytotic complex during interphase. Interacts with CCNF; interaction is required for nuclear localization. Interacts with CDK5RAP3. Interacts with RFPL4A and UBE2A. Interacts with INCA1. Ubiquitinated by the SCF(NIPA) complex during interphase, leading to its destruction. Not ubiquitinated during G2/M phases. Post-translationally, phosphorylated by PLK1 at Ser-129 on centrosomes during prophase: phosphorylation by PLK1 does not cause nuclear import. Phosphorylation at Ser-143 was also reported to be mediated by PLK1 but Ser-129 seems to be the primary phosphorylation site.

The protein resides in the cytoplasm. It is found in the nucleus. Its subcellular location is the cytoskeleton. The protein localises to the microtubule organizing center. It localises to the centrosome. Essential for the control of the cell cycle at the G2/M (mitosis) transition. The chain is G2/mitotic-specific cyclin-B1 (CCNB1) from Mesocricetus auratus (Golden hamster).